The sequence spans 329 residues: Epoxide hydrolase (329 aa).

The AB hydrolase-1 domain maps to 35–308; that stretch reads PAVLFCHGFP…DNVGHWVQHE (274 aa). The active-site Nucleophile is Asp-111. Tyr-242 functions as the Proton donor in the catalytic mechanism. Catalysis depends on His-303, which acts as the Proton acceptor.

Belongs to the AB hydrolase superfamily. Epoxide hydrolase family. As to quaternary structure, homodimer.

The enzyme catalyses an epoxide + H2O = an ethanediol. It catalyses the reaction (R)-styrene oxide + H2O = (R)-styrene glycol. The catalysed reaction is (S)-styrene oxide + H2O = (S)-styrene glycol. It carries out the reaction 3,4-epoxy-1-cyclohexene + H2O = cyclohex-3-ene-1,2-diol. Functionally, catalyzes the hydrolysis of various epoxides into diols. In vitro, shows the strongest activity toward aromatic and cyclic aliphatic epoxide compounds, since it shows strong activity toward (R)-styrene oxide, (S)-styrene oxide, and 3,4-epoxy-1-cyclohexene, but very weak activity toward (R)-epichlorohydrin, (S)-epichlorohydrin, and 1,2-epoxy-9-decene. The chain is Epoxide hydrolase from Caballeronia sordidicola (Burkholderia sordidicola).